Here is a 72-residue protein sequence, read N- to C-terminus: Conotoxin 3 (72 aa).

The N-terminal stretch at 1-22 (MKLTCVVIVAVLLLTACQLITA) is a signal peptide. The propeptide occupies 23–46 (DDSRGTQEHRALRSDTKLSMLTLR). Intrachain disulfides connect cysteine 47–cysteine 61, cysteine 54–cysteine 64, and cysteine 60–cysteine 71.

It belongs to the conotoxin O1 superfamily. As to expression, expressed by the venom duct.

It is found in the secreted. The protein is Conotoxin 3 of Conus striatus (Striated cone).